The primary structure comprises 599 residues: Translation initiation factor IF-2 (599 aa).

In terms of domain architecture, tr-type G spans 111 to 278 (PRPPIITVMG…SILLLAEILE (168 aa)). The G1 stretch occupies residues 120 to 127 (GHVDHGKT). Position 120-127 (120-127 (GHVDHGKT)) interacts with GTP. A G2 region spans residues 145-149 (GITQH). Positions 166–169 (DTPG) are G3. GTP-binding positions include 166-170 (DTPGH) and 220-223 (NKMD). The segment at 220–223 (NKMD) is G4. The interval 256 to 258 (SAL) is G5.

It belongs to the TRAFAC class translation factor GTPase superfamily. Classic translation factor GTPase family. IF-2 subfamily.

The protein localises to the cytoplasm. One of the essential components for the initiation of protein synthesis. Protects formylmethionyl-tRNA from spontaneous hydrolysis and promotes its binding to the 30S ribosomal subunits. Also involved in the hydrolysis of GTP during the formation of the 70S ribosomal complex. In Mesomycoplasma hyopneumoniae (strain 232) (Mycoplasma hyopneumoniae), this protein is Translation initiation factor IF-2.